Consider the following 360-residue polypeptide: Cannabinoid receptor 2 (360 aa).

Residues 1 to 33 (MEECWVTEIANGSKDGLDSNPMKDYMILSGPQK) lie on the Extracellular side of the membrane. The N-linked (GlcNAc...) asparagine glycan is linked to Asn11. The helical transmembrane segment at 34–59 (TAVAVLCTLLGLLSALENVAVLYLIL) threads the bilayer. The Cytoplasmic segment spans residues 60-71 (SSHQLRRKPSYL). A helical membrane pass occupies residues 72–92 (FIGSLAGADFLASVVFACSFV). The Extracellular segment spans residues 93 to 104 (NFHVFHGVDSKA). The chain crosses the membrane as a helical span at residues 105 to 129 (VFLLKIGSVTMTFTASVGSLLLTAI). The Cytoplasmic portion of the chain corresponds to 130–149 (DRYLCLRYPPSYKALLTRGR). Residues 150 to 172 (ALVTLGIMWVLSALVSYLPLMGW) form a helical membrane-spanning segment. At 173 to 188 (TCCPRPCSELFPLIPN) the chain is on the extracellular side. A helical transmembrane segment spans residues 189–214 (DYLLSWLLFIAFLFSGIIYTYGHVLW). Residues 215-246 (KAHQHVASLSGHQDRQVPGMARMRLDVRLAKT) are Cytoplasmic-facing. The helical transmembrane segment at 247 to 267 (LGLVLAVLLICWFPVLALMAH) threads the bilayer. Topologically, residues 268–279 (SLATTLSDQVKK) are extracellular. The helical transmembrane segment at 280–301 (AFAFCSMLCLINSMVNPVIYAL) threads the bilayer. Residues 302–360 (RSGEIRSSAHHCLAHWKKCVRGLGSEAKEEAPRSSVTETEADGKITPWPDSRDLDLSDC) are Cytoplasmic-facing. Residues 327–360 (EAKEEAPRSSVTETEADGKITPWPDSRDLDLSDC) form a disordered region. A phosphoserine mark is found at Ser335 and Ser336. Thr338 is subject to Phosphothreonine. Over residues 351 to 360 (DSRDLDLSDC) the composition is skewed to basic and acidic residues. Ser352 is modified (phosphoserine).

It belongs to the G-protein coupled receptor 1 family. Constitutively phosphorylated on Ser-352; phosphorylation increases cell internalization and desensitizes the receptor. Preferentially expressed in cells of the immune system with higher expression in B-cells and NK cells (at protein level). Expressed in skin in suprabasal layers and hair follicles (at protein level). Highly expressed in tonsil and to a lower extent in spleen, peripheral blood mononuclear cells, and thymus. PubMed:14657172 could not detect expression in normal brain. Expressed in brain by perivascular microglial cells and dorsal root ganglion sensory neurons (at protein level). Two isoforms are produced by alternative promoter usage and differ only in the 5' UTR: isoform CB2A is observed predominantly in testis with some expression in brain, while isoform CB2B is predominant in spleen and leukocytes.

The protein resides in the cell membrane. It is found in the cell projection. Its subcellular location is the dendrite. It localises to the perikaryon. In terms of biological role, heterotrimeric G protein-coupled receptor for endocannabinoid 2-arachidonoylglycerol mediating inhibition of adenylate cyclase. May function in inflammatory response, nociceptive transmission and bone homeostasis. In Homo sapiens (Human), this protein is Cannabinoid receptor 2 (CNR2).